Reading from the N-terminus, the 484-residue chain is Glutamate--tRNA ligase (484 aa).

Residues 11–21 (PSPTGLLHIGN) carry the 'HIGH' region motif. The 'KMSKS' region motif lies at 255–259 (KLSKR). Lys258 is an ATP binding site.

The protein belongs to the class-I aminoacyl-tRNA synthetase family. Glutamate--tRNA ligase type 1 subfamily. In terms of assembly, monomer.

It is found in the cytoplasm. The enzyme catalyses tRNA(Glu) + L-glutamate + ATP = L-glutamyl-tRNA(Glu) + AMP + diphosphate. Its function is as follows. Catalyzes the attachment of glutamate to tRNA(Glu) in a two-step reaction: glutamate is first activated by ATP to form Glu-AMP and then transferred to the acceptor end of tRNA(Glu). The protein is Glutamate--tRNA ligase of Streptococcus agalactiae serotype V (strain ATCC BAA-611 / 2603 V/R).